The chain runs to 218 residues: Peptide deformylase 1 (218 aa).

The Fe cation site is built by C126 and H168. Residue E169 is part of the active site. H172 lines the Fe cation pocket.

Belongs to the polypeptide deformylase family. Fe(2+) serves as cofactor.

The enzyme catalyses N-terminal N-formyl-L-methionyl-[peptide] + H2O = N-terminal L-methionyl-[peptide] + formate. Its function is as follows. Removes the formyl group from the N-terminal Met of newly synthesized proteins. Requires at least a dipeptide for an efficient rate of reaction. N-terminal L-methionine is a prerequisite for activity but the enzyme has broad specificity at other positions. This Streptomyces coelicolor (strain ATCC BAA-471 / A3(2) / M145) protein is Peptide deformylase 1.